We begin with the raw amino-acid sequence, 251 residues long: Aliphatic sulfonates import ATP-binding protein SsuB (251 aa).

Residues 3 to 231 (VSINEVSKYF…PRNKTSQSFQ (229 aa)) form the ABC transporter domain. 39–46 (GPSGCGKS) provides a ligand contact to ATP.

The protein belongs to the ABC transporter superfamily. Aliphatic sulfonates importer (TC 3.A.1.17.2) family. As to quaternary structure, the complex is composed of two ATP-binding proteins (SsuB), two transmembrane proteins (SsuC) and a solute-binding protein (SsuA).

Its subcellular location is the cell membrane. It catalyses the reaction ATP + H2O + aliphatic sulfonate-[sulfonate-binding protein]Side 1 = ADP + phosphate + aliphatic sulfonateSide 2 + [sulfonate-binding protein]Side 1.. Part of the ABC transporter complex SsuABC involved in aliphatic sulfonates import. Responsible for energy coupling to the transport system. In Bacillus anthracis, this protein is Aliphatic sulfonates import ATP-binding protein SsuB.